Consider the following 113-residue polypeptide: UPF0482 protein CKO_01577 (113 aa).

The first 28 residues, 1–28 (MNNTLSKRLCLTAMLALGAVVYTTSAFA), serve as a signal peptide directing secretion. The segment at 44–67 (RQHAAMEKEQWNDTRSLRQKVNTR) is disordered. The segment covering 47–59 (AAMEKEQWNDTRS) has biased composition (basic and acidic residues).

This sequence belongs to the UPF0482 family.

The protein is UPF0482 protein CKO_01577 of Citrobacter koseri (strain ATCC BAA-895 / CDC 4225-83 / SGSC4696).